A 411-amino-acid polypeptide reads, in one-letter code: Exodeoxyribonuclease 7 large subunit (411 aa).

It belongs to the XseA family. As to quaternary structure, heterooligomer composed of large and small subunits.

The protein localises to the cytoplasm. The enzyme catalyses Exonucleolytic cleavage in either 5'- to 3'- or 3'- to 5'-direction to yield nucleoside 5'-phosphates.. Its function is as follows. Bidirectionally degrades single-stranded DNA into large acid-insoluble oligonucleotides, which are then degraded further into small acid-soluble oligonucleotides. The sequence is that of Exodeoxyribonuclease 7 large subunit from Mycobacterium sp. (strain JLS).